The following is a 196-amino-acid chain: Mitochondrial inner membrane protein SHH3 (196 aa).

The transit peptide at 1–53 directs the protein to the mitochondrion; sequence MKATIQRVTSVFGVPRASVFVPRISTPFILHNYISNGRMDLFSKEFHNGRVSK. The Mitochondrial matrix portion of the chain corresponds to 54-97; the sequence is SDLWSSNKEEELLVSQRKKRPISPHLTVYEPEMSWYLSSLHRIS. Ser-91 and Arg-95 together coordinate a ubiquinone. Residues 98-118 form a helical membrane-spanning segment; the sequence is GVLLALGFYAFTITLGVTTIM. Residues 119–137 lie on the Mitochondrial intermembrane side of the membrane; that stretch reads GMDTTFQDLNKWYHEKMPK. A helical membrane pass occupies residues 138–160; sequence WSQWVAKGSAAYLFAFHFGNGIR. His-154 is a heme binding site. Over 161-174 the chain is Mitochondrial matrix; sequence HLIWDMGYELTNRG. Residues 175 to 195 form a helical membrane-spanning segment; it reads VIKTGSIVLAGTLVLGTYLLA. A topological domain (mitochondrial intermembrane) is located at residue Gln-196.

This sequence belongs to the cytochrome b560 family.

The protein resides in the mitochondrion inner membrane. Its function is as follows. Homolog of SDH3, but seems not to be a stoichiometric subunit of either the succinate dehydrogenase (SDH) complex or the mitochondrial inner membrane translocase TIM22 complex. The polypeptide is Mitochondrial inner membrane protein SHH3 (Saccharomyces cerevisiae (strain ATCC 204508 / S288c) (Baker's yeast)).